Reading from the N-terminus, the 176-residue chain is Replication restart protein PriC (176 aa).

It belongs to the PriC family. As to quaternary structure, component of the replication restart primosome, which is composed of PriA, PriB, PriC, DnaB and DnaT; DnaG primase associates transiently with this complex. Interacts with the C-terminus of SSB; this interaction is required to load the main replicative helicase onto substrate replication forks. Interacts with helicase DnaB alone and in the DnaB-DnaC complex, probably 1:1 binding with DnaB. Interacts with DnaT.

Its function is as follows. Involved in the restart of stalled replication forks, which reloads the DnaB replicative helicase on sites other than the origin of replication. Recognizes abandoned replication forks and remodels DNA single-stranded binding protein (SSB) on ssDNA to uncover a loading site for DnaB. There are several restart pathways, the PriA-PriC pathway is a minor restart pathway. Part of the minor PriC-Rep pathway for restart of stalled replication forks, which has a different substrate specificity than PriA. Part of the major restart pathway with PriA, PriB, DnaB, DnaT and DnaG primase. priB and priC have redundant roles in the cell. Binds 7-9 nucleotides of single-stranded (ss)DNA. The protein is Replication restart protein PriC of Klebsiella pneumoniae subsp. pneumoniae (strain ATCC 700721 / MGH 78578).